Here is an 84-residue protein sequence, read N- to C-terminus: UPF0410 protein YmgE (84 aa).

3 helical membrane passes run 1–21, 27–47, and 58–78; these read MGII…KLIM, GGFF…GWLA, and GFNL…LGVF.

The protein belongs to the UPF0410 family.

It is found in the cell inner membrane. The sequence is that of UPF0410 protein YmgE (ymgE) from Escherichia coli O127:H6 (strain E2348/69 / EPEC).